We begin with the raw amino-acid sequence, 172 residues long: Adenine phosphoribosyltransferase (172 aa).

It belongs to the purine/pyrimidine phosphoribosyltransferase family. Homodimer.

The protein resides in the cytoplasm. The enzyme catalyses AMP + diphosphate = 5-phospho-alpha-D-ribose 1-diphosphate + adenine. The protein operates within purine metabolism; AMP biosynthesis via salvage pathway; AMP from adenine: step 1/1. Catalyzes a salvage reaction resulting in the formation of AMP, that is energically less costly than de novo synthesis. The sequence is that of Adenine phosphoribosyltransferase from Streptococcus mutans serotype c (strain ATCC 700610 / UA159).